Here is a 111-residue protein sequence, read N- to C-terminus: Large ribosomal subunit protein uL22 (111 aa).

The protein belongs to the universal ribosomal protein uL22 family. As to quaternary structure, part of the 50S ribosomal subunit.

Its function is as follows. This protein binds specifically to 23S rRNA; its binding is stimulated by other ribosomal proteins, e.g. L4, L17, and L20. It is important during the early stages of 50S assembly. It makes multiple contacts with different domains of the 23S rRNA in the assembled 50S subunit and ribosome. Functionally, the globular domain of the protein is located near the polypeptide exit tunnel on the outside of the subunit, while an extended beta-hairpin is found that lines the wall of the exit tunnel in the center of the 70S ribosome. This Polynucleobacter necessarius subsp. necessarius (strain STIR1) protein is Large ribosomal subunit protein uL22.